The primary structure comprises 103 residues: Large ribosomal subunit protein bL21 (103 aa).

The protein belongs to the bacterial ribosomal protein bL21 family. As to quaternary structure, part of the 50S ribosomal subunit. Contacts protein L20.

Its function is as follows. This protein binds to 23S rRNA in the presence of protein L20. The sequence is that of Large ribosomal subunit protein bL21 from Paraburkholderia phymatum (strain DSM 17167 / CIP 108236 / LMG 21445 / STM815) (Burkholderia phymatum).